A 388-amino-acid chain; its full sequence is 4-hydroxy-3-methylbut-2-en-1-yl diphosphate synthase (flavodoxin) (388 aa).

[4Fe-4S] cluster-binding residues include C281, C284, C316, and E323.

Belongs to the IspG family. [4Fe-4S] cluster is required as a cofactor.

The catalysed reaction is (2E)-4-hydroxy-3-methylbut-2-enyl diphosphate + oxidized [flavodoxin] + H2O + 2 H(+) = 2-C-methyl-D-erythritol 2,4-cyclic diphosphate + reduced [flavodoxin]. The protein operates within isoprenoid biosynthesis; isopentenyl diphosphate biosynthesis via DXP pathway; isopentenyl diphosphate from 1-deoxy-D-xylulose 5-phosphate: step 5/6. Converts 2C-methyl-D-erythritol 2,4-cyclodiphosphate (ME-2,4cPP) into 1-hydroxy-2-methyl-2-(E)-butenyl 4-diphosphate. This Paenarthrobacter aurescens (strain TC1) protein is 4-hydroxy-3-methylbut-2-en-1-yl diphosphate synthase (flavodoxin).